A 214-amino-acid chain; its full sequence is GTP-binding nuclear protein Ran (214 aa).

Residues 6 to 170 (YIPQYKLILV…LWLARRLSNQ (165 aa)) enclose the Small GTPase Ran-type domain. 17-24 (DGGVGKTT) is a binding site for GTP. A switch-I region spans residues 36 to 44 (KKYIPTLGV). Residues glycine 67, 121 to 124 (NKVD), and 149 to 151 (SAR) each bind GTP. The switch-II stretch occupies residues 67 to 83 (GQEKFGGLRDGYYIKSD).

This sequence belongs to the small GTPase superfamily. Ran family. As to quaternary structure, found in a nuclear export complex with RanGTP, exportin and pre-miRNA.

The protein resides in the nucleus. In terms of biological role, GTP-binding protein involved in nucleocytoplasmic transport. Required for the import of protein into the nucleus and also for RNA export. Involved in chromatin condensation and control of cell cycle. The protein is GTP-binding nuclear protein Ran of Plasmodium falciparum.